A 112-amino-acid chain; its full sequence is Large ribosomal subunit protein bL17 (112 aa).

It belongs to the bacterial ribosomal protein bL17 family. Part of the 50S ribosomal subunit. Contacts protein L32.

This chain is Large ribosomal subunit protein bL17, found in Heliobacterium modesticaldum (strain ATCC 51547 / Ice1).